The following is a 498-amino-acid chain: Pre-glycoprotein polyprotein GP complex (498 aa).

G2 carries N-myristoyl glycine; by host lipidation. At 2 to 17 (GQIVTMFEALPHIIDE) the chain is on the extracellular side. A helical membrane pass occupies residues 18-33 (VINIVIIVLIIITSIK). At 34-58 (AVYNFATCGILALVSFLFLAGRSCG) the chain is on the cytoplasmic side. Residue C57 participates in Zn(2+) binding. Over 59-438 (MYGLNGPDIY…QGSTPLALMD (380 aa)) the chain is Extracellular. N85, N95, N114, N124, and N171 each carry an N-linked (GlcNAc...) asparagine; by host glycan. Cystine bridges form between C92–C239, C123–C160, C184–C220, C285–C298, C307–C316, and C370–C391. N-linked (GlcNAc...) asparagine; by host glycosylation is present at N232. N-linked (GlcNAc...) asparagine; by host glycans are attached at residues N371, N396, and N401. Residues 439–459 (LLMFSTSAYLISIFLHFVRIP) form a helical membrane-spanning segment. The Cytoplasmic portion of the chain corresponds to 460–498 (THRHIKGGSCPKPHRLTNKGICSCGAFKVPGVKTIWKRR). Residues H461, H463, C469, H473, C481, and C483 each contribute to the Zn(2+) site.

Belongs to the arenaviridae GPC protein family. As to quaternary structure, interacts with glycoprotein G2. Part of the GP complex (GP-C) together with glycoprotein G1 and glycoprotein G2. The GP-complex interacts with protein Z, which interacts with ribonucleocapsid; these interactions may induce virion budding. In terms of assembly, homotrimer; disulfide-linked. In pre-fusion state, G1 homotrimers bind G2 homotrimers via ionic interactions. Part of the GP complex (GP-C) together with glycoprotein G2 and the stable signal peptide. Interacts with the primary host receptor DAG1 on the cell surface. The GP-complex interacts with protein Z, which interacts with ribonucleocapsid; these interactions may induce virion budding. Homotrimer. Interacts with the stable signal peptide. In pre-fusion state, G2 homotrimers bind G1 homotrimers via ionic interactions. Part of the GP complex (GP-C) together with glycoprotein G1 and the stable signal peptide. Acidification in the endosome triggers rearrangements, which ultimately leads to a 6 helix bundle formed by the two heptad repeat domains (HR1 and HR2) in post-fusion state. The GP-complex interacts with protein Z, which interacts with ribonucleocapsid; these interactions may induce virion budding. Specific enzymatic cleavages in vivo yield mature proteins. GP-C polyprotein is cleaved in the endoplasmic reticulum by the host protease MBTPS1. Only cleaved glycoprotein is incorporated into virions. In terms of processing, the SSP remains stably associated with the GP complex following cleavage by signal peptidase and plays crucial roles in the trafficking of GP through the secretory pathway. Post-translationally, myristoylation is necessary for GP2-mediated fusion activity.

The protein localises to the virion membrane. Its subcellular location is the host endoplasmic reticulum membrane. It is found in the host Golgi apparatus membrane. It localises to the host cell membrane. Functionally, functions as a cleaved signal peptide that is retained as the third component of the GP complex (GP-C). Helps to stabilize the spike complex in its native conformation. The SSP is required for efficient glycoprotein expression, post-translational maturation cleavage of G1 and G2, glycoprotein transport to the cell surface plasma membrane, formation of infectious virus particles, and acid pH-dependent glycoprotein-mediated cell fusion. In terms of biological role, forms the virion spikes together with glycoprotein G2. The glycoprotein spike trimers are connected to the underlying matrix. Interacts with the host receptor. Mediates virus attachment to the host primary receptor alpha-dystroglycan DAG1 (alpha-DG) at the cell surface. Down-modulates host DAG1. Its function is as follows. Forms the virion spikes together with glycoprotein G1. The glycoprotein spike trimers are connected to the underlying matrix. Class I viral fusion protein that directs fusion of viral and host endosomal membranes, leading to delivery of the nucleocapsid into the cytoplasm. Membrane fusion is mediated by irreversible conformational changes induced by acidification. The chain is Pre-glycoprotein polyprotein GP complex from Homo sapiens (Human).